The primary structure comprises 210 residues: N-(5'-phosphoribosyl)anthranilate isomerase (210 aa).

Belongs to the TrpF family.

It carries out the reaction N-(5-phospho-beta-D-ribosyl)anthranilate = 1-(2-carboxyphenylamino)-1-deoxy-D-ribulose 5-phosphate. Its pathway is amino-acid biosynthesis; L-tryptophan biosynthesis; L-tryptophan from chorismate: step 3/5. The sequence is that of N-(5'-phosphoribosyl)anthranilate isomerase from Pseudomonas fluorescens (strain ATCC BAA-477 / NRRL B-23932 / Pf-5).